Reading from the N-terminus, the 599-residue chain is Sulfite reductase [NADPH] flavoprotein alpha-component (599 aa).

One can recognise a Flavodoxin-like domain in the interval 64–202 (ITIISASQTG…AASEWRARVV (139 aa)). Residues 70-75 (SQTGNA), 117-120 (STQG), and 153-162 (LGDSSYEFFC) contribute to the FMN site. The 215-residue stretch at 234 to 448 (DAPLVASLSV…IEHNDNFRLP (215 aa)) folds into the FAD-binding FR-type domain. FAD-binding positions include Thr-322, Ala-356, 386–389 (RLYS), 404–406 (TVG), Tyr-410, and 419–422 (GGAS). NADP(+) is bound by residues 519–520 (SR), 525–529 (KVYVQ), and Asp-561. Tyr-599 lines the FAD pocket.

Belongs to the NADPH-dependent sulphite reductase flavoprotein subunit CysJ family. This sequence in the N-terminal section; belongs to the flavodoxin family. The protein in the C-terminal section; belongs to the flavoprotein pyridine nucleotide cytochrome reductase family. Alpha(8)-beta(8). The alpha component is a flavoprotein, the beta component is a hemoprotein. FAD is required as a cofactor. FMN serves as cofactor.

It catalyses the reaction hydrogen sulfide + 3 NADP(+) + 3 H2O = sulfite + 3 NADPH + 4 H(+). It participates in sulfur metabolism; hydrogen sulfide biosynthesis; hydrogen sulfide from sulfite (NADPH route): step 1/1. In terms of biological role, component of the sulfite reductase complex that catalyzes the 6-electron reduction of sulfite to sulfide. This is one of several activities required for the biosynthesis of L-cysteine from sulfate. The flavoprotein component catalyzes the electron flow from NADPH -&gt; FAD -&gt; FMN to the hemoprotein component. This chain is Sulfite reductase [NADPH] flavoprotein alpha-component, found in Shigella dysenteriae serotype 1 (strain Sd197).